The primary structure comprises 115 residues: NADH-ubiquinone oxidoreductase chain 3 (115 aa).

The next 3 helical transmembrane spans lie at phenylalanine 3–tryptophan 23, phenylalanine 55–leucine 75, and leucine 84–tyrosine 104.

It belongs to the complex I subunit 3 family. In terms of assembly, core subunit of respiratory chain NADH dehydrogenase (Complex I) which is composed of 45 different subunits. Interacts with TMEM186. Interacts with TMEM242.

It is found in the mitochondrion inner membrane. The catalysed reaction is a ubiquinone + NADH + 5 H(+)(in) = a ubiquinol + NAD(+) + 4 H(+)(out). In terms of biological role, core subunit of the mitochondrial membrane respiratory chain NADH dehydrogenase (Complex I) which catalyzes electron transfer from NADH through the respiratory chain, using ubiquinone as an electron acceptor. Essential for the catalytic activity of complex I. The chain is NADH-ubiquinone oxidoreductase chain 3 from Pongo pygmaeus (Bornean orangutan).